Here is a 296-residue protein sequence, read N- to C-terminus: Ribosomal protein L11 methyltransferase (296 aa).

S-adenosyl-L-methionine is bound by residues Thr145, Gly166, Asp188, and Asn230.

Belongs to the methyltransferase superfamily. PrmA family.

It localises to the cytoplasm. The enzyme catalyses L-lysyl-[protein] + 3 S-adenosyl-L-methionine = N(6),N(6),N(6)-trimethyl-L-lysyl-[protein] + 3 S-adenosyl-L-homocysteine + 3 H(+). In terms of biological role, methylates ribosomal protein L11. The sequence is that of Ribosomal protein L11 methyltransferase from Photorhabdus laumondii subsp. laumondii (strain DSM 15139 / CIP 105565 / TT01) (Photorhabdus luminescens subsp. laumondii).